The primary structure comprises 475 residues: UDP-N-acetylmuramate--L-alanine ligase (475 aa).

An ATP-binding site is contributed by 118–124 (GTHGKTT).

The protein belongs to the MurCDEF family.

It is found in the cytoplasm. The catalysed reaction is UDP-N-acetyl-alpha-D-muramate + L-alanine + ATP = UDP-N-acetyl-alpha-D-muramoyl-L-alanine + ADP + phosphate + H(+). It participates in cell wall biogenesis; peptidoglycan biosynthesis. Cell wall formation. The sequence is that of UDP-N-acetylmuramate--L-alanine ligase from Paracoccus denitrificans (strain Pd 1222).